The chain runs to 444 residues: Glutamate--tRNA ligase 1 (444 aa).

Positions 8-18 match the 'HIGH' region motif; that stretch reads PSPTGFLHVGN. The 'KMSKS' region signature appears at 239–243; that stretch reads KISKR. Position 242 (Lys242) interacts with ATP.

The protein belongs to the class-I aminoacyl-tRNA synthetase family. Glutamate--tRNA ligase type 1 subfamily. In terms of assembly, monomer.

The protein localises to the cytoplasm. The enzyme catalyses tRNA(Glu) + L-glutamate + ATP = L-glutamyl-tRNA(Glu) + AMP + diphosphate. Its function is as follows. Catalyzes the attachment of glutamate to tRNA(Glu) in a two-step reaction: glutamate is first activated by ATP to form Glu-AMP and then transferred to the acceptor end of tRNA(Glu). The protein is Glutamate--tRNA ligase 1 of Zymomonas mobilis subsp. mobilis (strain ATCC 31821 / ZM4 / CP4).